The following is a 270-amino-acid chain: Tryptophan 2,3-dioxygenase-like protein (270 aa).

This sequence belongs to the tryptophan 2,3-dioxygenase family.

This is Tryptophan 2,3-dioxygenase-like protein from Xanthomonas campestris pv. campestris (strain 8004).